The sequence spans 30 residues: SVDFNSESTRREEKQKEIVDLHNXLRDXVX.

Belongs to the CRISP family. Post-translationally, contains 8 disulfide bonds. As to expression, expressed by the venom gland.

Its subcellular location is the secreted. Inhibits calcium-activated potassium channels (KCa), voltage-gated potassium channel (Kv), and the calcium release channel/ryanodine receptor (RyR). The sequence is that of Cysteine-rich venom protein hematin from Hemachatus haemachatus (Rinkhals).